A 178-amino-acid polypeptide reads, in one-letter code: Cytidylate kinase (178 aa).

Residue 7–15 (GLPGTGTTT) participates in ATP binding.

Belongs to the cytidylate kinase family. Type 2 subfamily.

It is found in the cytoplasm. The catalysed reaction is CMP + ATP = CDP + ADP. It carries out the reaction dCMP + ATP = dCDP + ADP. This is Cytidylate kinase from Methanococcus maripaludis (strain C5 / ATCC BAA-1333).